We begin with the raw amino-acid sequence, 571 residues long: Gag-Pro polyprotein (571 aa).

Glycine 2 carries the N-myristoyl glycine; by host lipid modification. A PPXY motif motif is present at residues 100–103; that stretch reads PPPY. Repeats lie at residues 342–362 and 367–387; these read PPGP…CPTK and PPGP…CPTL. 2 CCHC-type zinc fingers span residues 345-362 and 370-387; these read PCYR…CPTK and PCPI…CPTL. Catalysis depends on threonine 453, which acts as the Protease; shared with dimeric partner.

As to quaternary structure, homodimer; the homodimers are part of the immature particles. Interacts with human TSG101 and NEDD4; these interactions are essential for budding and release of viral particles. Homodimer; further assembles as homohexamers. Post-translationally, specific enzymatic cleavages by the viral protease yield mature proteins. The polyprotein is cleaved during and after budding, this process is termed maturation. The protease is autoproteolytically processed at its N- and C-termini. Myristoylated. Myristoylation of the matrix (MA) domain mediates the transport and binding of Gag polyproteins to the host plasma membrane and is required for the assembly of viral particles.

It localises to the virion. The matrix domain targets Gag, Gag-Pro and Gag-Pro-Pol polyproteins to the plasma membrane via a multipartite membrane binding signal, that includes its myristoylated N-terminus. Its function is as follows. Matrix protein. In terms of biological role, forms the spherical core of the virus that encapsulates the genomic RNA-nucleocapsid complex. Functionally, binds strongly to viral nucleic acids and promote their aggregation. Also destabilizes the nucleic acids duplexes via highly structured zinc-binding motifs. The aspartyl protease mediates proteolytic cleavages of Gag and Gag-Pol polyproteins during or shortly after the release of the virion from the plasma membrane. Cleavages take place as an ordered, step-wise cascade to yield mature proteins. This process is called maturation. Displays maximal activity during the budding process just prior to particle release from the cell. This chain is Gag-Pro polyprotein, found in Bovine leukemia virus (isolate Japanese BLV-1) (BLV).